The chain runs to 125 residues: Photosystem I reaction center subunit IV, chloroplastic (125 aa).

The N-terminal 34 residues, 1–34 (MASIASSVAVRLGLTQVLPNKNFSSPRSTRLVVR), are a transit peptide targeting the chloroplast. The segment covering 42 to 57 (APAAASPEGEAPKAAA) has biased composition (low complexity). The interval 42–68 (APAAASPEGEAPKAAAKPPPIGPKRGS) is disordered.

It belongs to the PsaE family.

It localises to the plastid. The protein resides in the chloroplast thylakoid membrane. In terms of biological role, stabilizes the interaction between PsaC and the PSI core, assists the docking of the ferredoxin to PSI and interacts with ferredoxin-NADP oxidoreductase. The protein is Photosystem I reaction center subunit IV, chloroplastic (PSAE-1) of Spinacia oleracea (Spinach).